Reading from the N-terminus, the 328-residue chain is Cytochrome c biogenesis protein CcsA (328 aa).

A run of 8 helical transmembrane segments spans residues phenylalanine 15–proline 35, leucine 36–leucine 56, isoleucine 68–isoleucine 88, leucine 97–leucine 117, valine 142–isoleucine 162, valine 236–asparagine 256, tryptophan 263–leucine 283, and alanine 297–leucine 317.

Belongs to the CcmF/CycK/Ccl1/NrfE/CcsA family. May interact with ccs1.

It localises to the cellular thylakoid membrane. In terms of biological role, required during biogenesis of c-type cytochromes (cytochrome c6 and cytochrome f) at the step of heme attachment. This Microcystis aeruginosa (strain NIES-843 / IAM M-2473) protein is Cytochrome c biogenesis protein CcsA.